The chain runs to 469 residues: Dihydrolipoyl dehydrogenase (469 aa).

Residues 34 to 42 (EKQYWGGVC), Lys51, and Gly114 each bind FAD. A disulfide bridge connects residues Cys42 and Cys47. Residues 179–183 (GAGAI), Glu202, and 269–272 (SVGF) each bind NAD(+). 2 residues coordinate FAD: Asp312 and Ala320. The active-site Proton acceptor is the His448.

It belongs to the class-I pyridine nucleotide-disulfide oxidoreductase family. Homodimer. Part of an unusual ODH/PDH supercomplex, consisting of AceE (E1), AceF (E2), and Lpd (E3) together with OdhA (E1+E2). Requires FAD as cofactor.

The protein localises to the cytoplasm. The catalysed reaction is N(6)-[(R)-dihydrolipoyl]-L-lysyl-[protein] + NAD(+) = N(6)-[(R)-lipoyl]-L-lysyl-[protein] + NADH + H(+). Its pathway is carbohydrate metabolism; tricarboxylic acid cycle; succinyl-CoA from 2-oxoglutarate (dehydrogenase route): step 1/1. In terms of biological role, lipoamide dehydrogenase is an essential component of the pyruvate dehydrogenase (PDH) and 2-oxoglutarate dehydrogenase (ODH) complexes. Catalyzes the reoxidation of dihydrolipoyl groups which are covalently attached to the lipoate acyltransferase components (E2) of the complexes. Also catalyzes a reversible NADH:NAD(+) transhydrogenation, and is able to transfer electrons from NADH to various redox-active compounds and quinones. May be involved in quinone redox cycling in C.glutamicum. The polypeptide is Dihydrolipoyl dehydrogenase (lpd) (Corynebacterium glutamicum (strain ATCC 13032 / DSM 20300 / JCM 1318 / BCRC 11384 / CCUG 27702 / LMG 3730 / NBRC 12168 / NCIMB 10025 / NRRL B-2784 / 534)).